The primary structure comprises 60 residues: Large ribosomal subunit protein bL32 (60 aa).

Positions 1–16 (MPNPKRRHSKKRTSTR) are enriched in basic residues. A disordered region spans residues 1–28 (MPNPKRRHSKKRTSTRRAHDALKQPGLS).

Belongs to the bacterial ribosomal protein bL32 family.

This is Large ribosomal subunit protein bL32 from Solibacter usitatus (strain Ellin6076).